Reading from the N-terminus, the 405-residue chain is Deoxyguanosinetriphosphate triphosphohydrolase-like protein (405 aa).

Residues 75 to 219 (RLTHTIEVAQ…AAIADDIAYN (145 aa)) enclose the HD domain.

The protein belongs to the dGTPase family. Type 2 subfamily.

The polypeptide is Deoxyguanosinetriphosphate triphosphohydrolase-like protein (Rhizobium etli (strain ATCC 51251 / DSM 11541 / JCM 21823 / NBRC 15573 / CFN 42)).